The following is a 111-amino-acid chain: Pyrimidine/purine nucleoside phosphorylase 1 (111 aa).

The protein belongs to the nucleoside phosphorylase PpnP family.

The enzyme catalyses a purine D-ribonucleoside + phosphate = a purine nucleobase + alpha-D-ribose 1-phosphate. It carries out the reaction adenosine + phosphate = alpha-D-ribose 1-phosphate + adenine. The catalysed reaction is cytidine + phosphate = cytosine + alpha-D-ribose 1-phosphate. It catalyses the reaction guanosine + phosphate = alpha-D-ribose 1-phosphate + guanine. The enzyme catalyses inosine + phosphate = alpha-D-ribose 1-phosphate + hypoxanthine. It carries out the reaction thymidine + phosphate = 2-deoxy-alpha-D-ribose 1-phosphate + thymine. The catalysed reaction is uridine + phosphate = alpha-D-ribose 1-phosphate + uracil. It catalyses the reaction xanthosine + phosphate = alpha-D-ribose 1-phosphate + xanthine. In terms of biological role, catalyzes the phosphorolysis of diverse nucleosides, yielding D-ribose 1-phosphate and the respective free bases. Can use uridine, adenosine, guanosine, cytidine, thymidine, inosine and xanthosine as substrates. Also catalyzes the reverse reactions. In Psychrobacter arcticus (strain DSM 17307 / VKM B-2377 / 273-4), this protein is Pyrimidine/purine nucleoside phosphorylase 1.